A 255-amino-acid polypeptide reads, in one-letter code: Type III pantothenate kinase (255 aa).

7–14 (DVGNTRLK) is an ATP binding site. Substrate contacts are provided by residues Tyr96 and 103-106 (GADR). Asp105 (proton acceptor) is an active-site residue. Thr133 contributes to the ATP binding site. Substrate is bound at residue Thr183.

The protein belongs to the type III pantothenate kinase family. In terms of assembly, homodimer. Requires NH4(+) as cofactor. K(+) is required as a cofactor.

It is found in the cytoplasm. It carries out the reaction (R)-pantothenate + ATP = (R)-4'-phosphopantothenate + ADP + H(+). The protein operates within cofactor biosynthesis; coenzyme A biosynthesis; CoA from (R)-pantothenate: step 1/5. Functionally, catalyzes the phosphorylation of pantothenate (Pan), the first step in CoA biosynthesis. The sequence is that of Type III pantothenate kinase from Polaromonas sp. (strain JS666 / ATCC BAA-500).